A 113-amino-acid chain; its full sequence is Cytochrome c55X (113 aa).

Residues 1–26 (MTVARHAVSRLGLALASFLLFPLALA) form the signal peptide. 3 residues coordinate heme c: C45, C48, and H49.

In terms of processing, binds 1 heme c group covalently per subunit.

It is found in the periplasm. Its function is as follows. Monoheme c-type cytochrome. In Stutzerimonas stutzeri (Pseudomonas stutzeri), this protein is Cytochrome c55X (nirC).